A 226-amino-acid polypeptide reads, in one-letter code: Flagellar L-ring protein (226 aa).

Positions 1-15 (MKRLAVSILCLALAG) are cleaved as a signal peptide. Residue cysteine 16 is the site of N-palmitoyl cysteine attachment. Cysteine 16 carries the S-diacylglycerol cysteine lipid modification.

Belongs to the FlgH family. The basal body constitutes a major portion of the flagellar organelle and consists of four rings (L,P,S, and M) mounted on a central rod.

It localises to the cell outer membrane. Its subcellular location is the bacterial flagellum basal body. Its function is as follows. Assembles around the rod to form the L-ring and probably protects the motor/basal body from shearing forces during rotation. This chain is Flagellar L-ring protein, found in Geobacter metallireducens (strain ATCC 53774 / DSM 7210 / GS-15).